The following is a 171-amino-acid chain: Putative phosphoesterase ABC1741 (171 aa).

Residue histidine 34 is the Proton donor of the active site. 2 short sequence motifs (HXTX) span residues 34-37 (HITL) and 116-119 (HITI). Catalysis depends on histidine 116, which acts as the Proton acceptor.

It belongs to the 2H phosphoesterase superfamily. YjcG family.

This chain is Putative phosphoesterase ABC1741, found in Shouchella clausii (strain KSM-K16) (Alkalihalobacillus clausii).